Reading from the N-terminus, the 287-residue chain is Thiazole synthase (287 aa).

The Schiff-base intermediate with DXP role is filled by Lys-111. Residues Gly-172, 203 to 204 (AG), and 225 to 226 (NT) each bind 1-deoxy-D-xylulose 5-phosphate. Residues 268–287 (PQEGVISTRPYGSQADEIGS) are disordered.

Belongs to the ThiG family. In terms of assembly, homotetramer. Forms heterodimers with either ThiH or ThiS.

It is found in the cytoplasm. The catalysed reaction is [ThiS sulfur-carrier protein]-C-terminal-Gly-aminoethanethioate + 2-iminoacetate + 1-deoxy-D-xylulose 5-phosphate = [ThiS sulfur-carrier protein]-C-terminal Gly-Gly + 2-[(2R,5Z)-2-carboxy-4-methylthiazol-5(2H)-ylidene]ethyl phosphate + 2 H2O + H(+). Its pathway is cofactor biosynthesis; thiamine diphosphate biosynthesis. Its function is as follows. Catalyzes the rearrangement of 1-deoxy-D-xylulose 5-phosphate (DXP) to produce the thiazole phosphate moiety of thiamine. Sulfur is provided by the thiocarboxylate moiety of the carrier protein ThiS. In vitro, sulfur can be provided by H(2)S. The sequence is that of Thiazole synthase from Rhodopirellula baltica (strain DSM 10527 / NCIMB 13988 / SH1).